The primary structure comprises 165 residues: Small ribosomal subunit protein uS5 (165 aa).

Residues 13–76 (LEEKVLVVNR…EAARKNLITI (64 aa)) form the S5 DRBM domain.

It belongs to the universal ribosomal protein uS5 family. In terms of assembly, part of the 30S ribosomal subunit. Contacts proteins S4 and S8.

In terms of biological role, with S4 and S12 plays an important role in translational accuracy. Its function is as follows. Located at the back of the 30S subunit body where it stabilizes the conformation of the head with respect to the body. The sequence is that of Small ribosomal subunit protein uS5 from Chlamydia caviae (strain ATCC VR-813 / DSM 19441 / 03DC25 / GPIC) (Chlamydophila caviae).